Reading from the N-terminus, the 283-residue chain is Pantothenate synthetase (283 aa).

Residue 30-37 (MGNLHNGH) participates in ATP binding. The active-site Proton donor is the H37. Q61 is a (R)-pantoate binding site. Q61 serves as a coordination point for beta-alanine. 149–152 (GEKD) contacts ATP. Q155 serves as a coordination point for (R)-pantoate. Position 186 to 189 (186 to 189 (LSSR)) interacts with ATP.

This sequence belongs to the pantothenate synthetase family. In terms of assembly, homodimer.

The protein resides in the cytoplasm. It catalyses the reaction (R)-pantoate + beta-alanine + ATP = (R)-pantothenate + AMP + diphosphate + H(+). Its pathway is cofactor biosynthesis; (R)-pantothenate biosynthesis; (R)-pantothenate from (R)-pantoate and beta-alanine: step 1/1. In terms of biological role, catalyzes the condensation of pantoate with beta-alanine in an ATP-dependent reaction via a pantoyl-adenylate intermediate. This Shigella flexneri serotype 5b (strain 8401) protein is Pantothenate synthetase.